Reading from the N-terminus, the 215-residue chain is Variable small protein 2 (215 aa).

The N-terminal stretch at 1–18 is a signal peptide; that stretch reads MRKRISAIIMTLFMVFMS. Cys19 carries the N-palmitoyl cysteine lipid modification. Cys19 is lipidated: S-diacylglycerol cysteine.

It belongs to the variable small protein (Vsp) family.

It is found in the cell outer membrane. In terms of biological role, the Vlp and Vsp proteins are antigenically distinct proteins, only one vlp or vsp gene is transcriptionally active at any one time. Switching between these genes is a mechanism of host immune response evasion. In Borrelia hermsii, this protein is Variable small protein 2.